A 173-amino-acid polypeptide reads, in one-letter code: Putative pre-16S rRNA nuclease (173 aa).

This sequence belongs to the YqgF nuclease family.

Its subcellular location is the cytoplasm. Functionally, could be a nuclease involved in processing of the 5'-end of pre-16S rRNA. The sequence is that of Putative pre-16S rRNA nuclease from Rhodopirellula baltica (strain DSM 10527 / NCIMB 13988 / SH1).